Here is a 438-residue protein sequence, read N- to C-terminus: FRLVEKKTGKVWAGKFFKAYSAKEKENIRQEISIMNCLHHPKLVQCVDAFEEKANIVMVLEIVSGGELFERIIDEDFELTERECIKYMKQISEGVEYIHKQGIVHLDLKPENIMCVNKTGTRIKLIDFGLARRLENAGSLKVLFGTPEFVAPEVINYEPIGYATDMWSIGVICYILVSGLSPFMGDNDNETLANVTSATWDFDDEAFDEISDDAKDFISNLLKKDIKNRLNCTQCLQHPWLXXXTKNMEAKKLSKHRMKKYMARRKWQKTGNAVRAIGRLSSMAMISGLSGRKSSTGSPTSPLNAEKLESEEDVSQAFLEAVAEEKPHVKPYFSKTIRDLEVVEGSAARFDCKIEGYPDPEVVWFKDDQSIRESRHFQIDYQEDGNCSLIISDVCGDDDAKYTCKAVNSLGEATCTAELIVETMEEGEGEGGEEEEEE.

In terms of domain architecture, Protein kinase spans 1–241 (FRLVEKKTGK…CTQCLQHPWL (241 aa)). K15 contacts ATP. Y97 carries the phosphotyrosine; by ABL1 modification. The Proton acceptor role is filled by D107. Residue Y157 is modified to Phosphotyrosine; by ABL1. The tract at residues 233–296 (TQCLQHPWLX…SGLSGRKSST (64 aa)) is calmodulin-binding. A phosphoserine mark is found at S281, S282, S294, S295, and S298. The interval 283–438 (MAMISGLSGR…GEGGEEEEEE (156 aa)) is telokin. The disordered stretch occupies residues 289–309 (LSGRKSSTGSPTSPLNAEKLE). The segment covering 292–303 (RKSSTGSPTSPL) has biased composition (polar residues). The residue at position 300 (T300) is a Phosphothreonine. S301 bears the Phosphoserine mark. In terms of domain architecture, Ig-like C2-type spans 331-420 (PYFSKTIRDL…GEATCTAELI (90 aa)). A disulfide bond links C352 and C404.

The protein belongs to the protein kinase superfamily. CAMK Ser/Thr protein kinase family. As to quaternary structure, all isoforms including Telokin bind calmodulin. Interacts with SVIL. Interacts with CTTN; this interaction is reduced during thrombin-induced endothelial cell (EC) contraction but is promoted by the barrier-protective agonist sphingosine 1-phosphate (S1P) within lamellipodia. A complex made of ABL1, CTTN and MYLK regulates cortical actin-based cytoskeletal rearrangement critical to sphingosine 1-phosphate (S1P)-mediated endothelial cell (EC) barrier enhancement. Binds to NAA10/ARD1 and PTK2B/PYK2. The cofactor is Mg(2+). It depends on Ca(2+) as a cofactor. The C-terminus is deglutamylated by AGTPBP1/CCP1, AGBL1/CCP4 and AGBL4/CCP6, leading to the formation of Myosin light chain kinase, smooth muscle, deglutamylated form. The consequences of C-terminal deglutamylation are unknown. In terms of processing, can probably be down-regulated by phosphorylation. Tyrosine phosphorylation by ABL1 increases kinase activity, reverses MLCK-mediated inhibition of Arp2/3-mediated actin polymerization, and enhances CTTN-binding. Phosphorylation by SRC promotes CTTN binding.

It is found in the cytoplasm. It localises to the cell projection. The protein localises to the lamellipodium. The protein resides in the cleavage furrow. Its subcellular location is the cytoskeleton. It is found in the stress fiber. The enzyme catalyses L-seryl-[myosin light chain] + ATP = O-phospho-L-seryl-[myosin light chain] + ADP + H(+). It catalyses the reaction L-threonyl-[myosin light chain] + ATP = O-phospho-L-threonyl-[myosin light chain] + ADP + H(+). Its function is as follows. Calcium/calmodulin-dependent myosin light chain kinase implicated in smooth muscle contraction via phosphorylation of myosin light chains (MLC). Also regulates actin-myosin interaction through a non-kinase activity. Phosphorylates PTK2B/PYK2 and myosin light-chains. Involved in the inflammatory response (e.g. apoptosis, vascular permeability, leukocyte diapedesis), cell motility and morphology, airway hyperreactivity and other activities relevant to asthma. Required for tonic airway smooth muscle contraction that is necessary for physiological and asthmatic airway resistance. Necessary for gastrointestinal motility. Implicated in the regulation of endothelial as well as vascular permeability, probably via the regulation of cytoskeletal rearrangements. In the nervous system it has been shown to control the growth initiation of astrocytic processes in culture and to participate in transmitter release at synapses formed between cultured sympathetic ganglion cells. Critical participant in signaling sequences that result in fibroblast apoptosis. Plays a role in the regulation of epithelial cell survival. Required for epithelial wound healing, especially during actomyosin ring contraction during purse-string wound closure. Mediates RhoA-dependent membrane blebbing. Triggers TRPC5 channel activity in a calcium-dependent signaling, by inducing its subcellular localization at the plasma membrane. Promotes cell migration (including tumor cells) and tumor metastasis. PTK2B/PYK2 activation by phosphorylation mediates ITGB2 activation and is thus essential to trigger neutrophil transmigration during acute lung injury (ALI). May regulate optic nerve head astrocyte migration. Probably involved in mitotic cytoskeletal regulation. Regulates tight junction probably by modulating ZO-1 exchange in the perijunctional actomyosin ring. Mediates burn-induced microvascular barrier injury; triggers endothelial contraction in the development of microvascular hyperpermeability by phosphorylating MLC. Essential for intestinal barrier dysfunction. Mediates Giardia spp.-mediated reduced epithelial barrier function during giardiasis intestinal infection via reorganization of cytoskeletal F-actin and tight junctional ZO-1. Necessary for hypotonicity-induced Ca(2+) entry and subsequent activation of volume-sensitive organic osmolyte/anion channels (VSOAC) in cervical cancer cells. The sequence is that of Myosin light chain kinase, smooth muscle (MYLK) from Ovis aries (Sheep).